We begin with the raw amino-acid sequence, 322 residues long: Acetylglutamate kinase (322 aa).

Substrate-binding positions include 89–90 (GG), Arg111, and Asn217.

The protein belongs to the acetylglutamate kinase family. ArgB subfamily.

It localises to the cytoplasm. It catalyses the reaction N-acetyl-L-glutamate + ATP = N-acetyl-L-glutamyl 5-phosphate + ADP. It functions in the pathway amino-acid biosynthesis; L-arginine biosynthesis; N(2)-acetyl-L-ornithine from L-glutamate: step 2/4. Catalyzes the ATP-dependent phosphorylation of N-acetyl-L-glutamate. This is Acetylglutamate kinase from Ehrlichia ruminantium (strain Gardel).